The following is a 200-amino-acid chain: Glutathione S-transferase 1-1 (200 aa).

The GST N-terminal domain maps to 1–73 (GSSPCRSVIM…YLVEKYGKTD (73 aa)). Glutathione-binding positions include serine 2, 43–45 (HTI), and 57–59 (ESR). Positions 79–200 (CPKKRAVINQ…AGCLEFKKYF (122 aa)) constitute a GST C-terminal domain.

Belongs to the GST superfamily. Theta family. As to quaternary structure, homodimer.

It catalyses the reaction RX + glutathione = an S-substituted glutathione + a halide anion + H(+). It carries out the reaction 1,1,1-trichloro-2,2-bis(4-chlorophenyl)ethane = 1,1-dichloro-2,2-bis(4-chlorophenyl)ethylene + chloride + H(+). Functionally, conjugation of reduced glutathione to a wide number of exogenous and endogenous hydrophobic electrophiles. Has DDT dehydrochlorinase activity. This is Glutathione S-transferase 1-1 (GstD1) from Drosophila teissieri (Fruit fly).